A 348-amino-acid chain; its full sequence is MTIEVRNIVKEFGSFRALDNVDLRVETGELMALLGPSGSGKTTLLRIIAGLEWPDSGVVTIDGEDALAHGAAERHVGFVFQHYALFRHMNVFENVAFGLRVQPRKIRKSEAEIKKRVGDLLDLVQLGWLADRYPNQLSGGQRQRIALARALAIEPRILLLDEPFGALDAKVRKELRAWLRNLHEEIHVTSIFVTHDQEEALEVANRVVVMDKGRIEQIGSPGDVYERPASAFVHGFIGESIVLPVEVRDGRVRLGDRDLDLGAQDAAAGPSKLFVRRHDVTVGPSGSGVFEGAVKAVRAFGPMQRADIVLNDLGSDTLIEIDAPRDHSLKVGDRIGLQPQRYRIFADR.

The region spanning 3–237 is the ABC transporter domain; it reads IEVRNIVKEF…PASAFVHGFI (235 aa). Residue 35–42 participates in ATP binding; sequence GPSGSGKT.

Belongs to the ABC transporter superfamily. Sulfate/tungstate importer (TC 3.A.1.6) family. In terms of assembly, the complex is composed of two ATP-binding proteins (CysA), two transmembrane proteins (CysT and CysW) and a solute-binding protein (CysP).

It is found in the cell inner membrane. It catalyses the reaction sulfate(out) + ATP + H2O = sulfate(in) + ADP + phosphate + H(+). The catalysed reaction is thiosulfate(out) + ATP + H2O = thiosulfate(in) + ADP + phosphate + H(+). Its function is as follows. Part of the ABC transporter complex CysAWTP involved in sulfate/thiosulfate import. Responsible for energy coupling to the transport system. The polypeptide is Sulfate/thiosulfate import ATP-binding protein CysA (Rhodopseudomonas palustris (strain ATCC BAA-98 / CGA009)).